The primary structure comprises 488 residues: MELLLLLLSTLLILTLCCHFFYLFIRTNKQNGSEKLPLPPGHVSWPFKYFETLDYLKKARTNTIHKFIAERVQKYKTKCFKTCHIGQNMVFLTSAEGNKFLFSNDYKLVRSWWPVTFLKVFENAGEEITVEEVIRARKQFLSFFNEPDALARHVAITDQVVQDHFKCYWDGSKQVGVYPLARKLTFDVSCRLLADIQDREILDESLPLMGNVVRAFFAFPINFPGTILNRAIKSSRRLRKIFVDIIKERRGDLLEKKNLDQRNDVLSRLLVENYKEGRDIDDVFLAKNLVSLLSAAYDNPSVTITSIVKNLAERPEIYEKVRKEQIEIAKSKAPGEHMSMEDVKKMKFSMNVLSESLRLEAPASGTFREALDDFNYEGFLIPKGWKVHWSVHATHRNPEYFSNPETFDPSRFERNDPIVPYSYVPFGGGHHICPGKDYAKLQILLFMHHVVRKFKWEKVNPDEQLIRAPNLFAPKGLPVRLYPYAYEN.

Residues 5-25 (LLLLSTLLILTLCCHFFYLFI) traverse the membrane as a helical segment. Residue cysteine 433 participates in heme binding.

This sequence belongs to the cytochrome P450 family. It depends on heme as a cofactor. As to expression, expressed in maturing fruits and in juice vesicles.

The protein localises to the membrane. It carries out the reaction (1R,2R,3S,8R,10R,11R,15S,16S)-3-(acetyloxy)-15-[(4R)-4-[(2S)-3,3-dimethyloxiran-2-yl]-1,4-dihydroxybutan-2-yl]-2,7,7,11,16-pentamethyl-5-oxo-6-oxatetracyclo[9.7.0.0(2,8).0(12,16)]octadec-12-en-10-yl acetate + reduced [NADPH--hemoprotein reductase] + O2 = (1R,2R,3S,8R,10R,11R,15S,16S)-3-(acetyloxy)-15-(1-hydroxy-4-oxobutan-2-yl)-2,7,7,11,16-pentamethyl-5-oxo-6-oxatetracyclo[9.7.0.0(2,8).0(12,16)]octadec-12-en-10-yl acetate + 2-methylpropanoate + oxidized [NADPH--hemoprotein reductase] + H2O + 2 H(+). Its pathway is secondary metabolite biosynthesis; terpenoid biosynthesis. Functionally, monooxygenase involved in the biosynthesis of limonoids triterpene natural products such as limonin, a compound with insecticidal activity responsible for the bitter taste in citrus. Catalyzes the formation of (1R,2R,3S,8R,10R,11R,15S,16S)-3-(acetyloxy)-15-(1-hydroxy-4-oxobutan-2-yl)-2,7,7,11,16-pentamethyl-5-oxo-6-oxatetracyclo[9.7.0.0(2,8).0(12,16)]octadec-12-en-10-yl acetate. The sequence is that of Cytochrome P450 family 716 subfamily AD polypeptide 2 from Citrus sinensis (Sweet orange).